The following is a 227-amino-acid chain: Phosphoribosylformylglycinamidine synthase subunit PurQ (227 aa).

The Glutamine amidotransferase type-1 domain maps to 3 to 227; the sequence is SSVITFPGSN…FFQNLINNLK (225 aa). C85 (nucleophile) is an active-site residue. Catalysis depends on residues H201 and E203.

In terms of assembly, part of the FGAM synthase complex composed of 1 PurL, 1 PurQ and 2 PurS subunits.

The protein resides in the cytoplasm. The enzyme catalyses N(2)-formyl-N(1)-(5-phospho-beta-D-ribosyl)glycinamide + L-glutamine + ATP + H2O = 2-formamido-N(1)-(5-O-phospho-beta-D-ribosyl)acetamidine + L-glutamate + ADP + phosphate + H(+). It catalyses the reaction L-glutamine + H2O = L-glutamate + NH4(+). The protein operates within purine metabolism; IMP biosynthesis via de novo pathway; 5-amino-1-(5-phospho-D-ribosyl)imidazole from N(2)-formyl-N(1)-(5-phospho-D-ribosyl)glycinamide: step 1/2. In terms of biological role, part of the phosphoribosylformylglycinamidine synthase complex involved in the purines biosynthetic pathway. Catalyzes the ATP-dependent conversion of formylglycinamide ribonucleotide (FGAR) and glutamine to yield formylglycinamidine ribonucleotide (FGAM) and glutamate. The FGAM synthase complex is composed of three subunits. PurQ produces an ammonia molecule by converting glutamine to glutamate. PurL transfers the ammonia molecule to FGAR to form FGAM in an ATP-dependent manner. PurS interacts with PurQ and PurL and is thought to assist in the transfer of the ammonia molecule from PurQ to PurL. In Pelagibacter ubique (strain HTCC1062), this protein is Phosphoribosylformylglycinamidine synthase subunit PurQ.